Here is a 284-residue protein sequence, read N- to C-terminus: Bifunctional protein FolD (284 aa).

NADP(+) contacts are provided by residues 166–168 (GAS), S191, and I232.

It belongs to the tetrahydrofolate dehydrogenase/cyclohydrolase family. Homodimer.

The catalysed reaction is (6R)-5,10-methylene-5,6,7,8-tetrahydrofolate + NADP(+) = (6R)-5,10-methenyltetrahydrofolate + NADPH. It carries out the reaction (6R)-5,10-methenyltetrahydrofolate + H2O = (6R)-10-formyltetrahydrofolate + H(+). It functions in the pathway one-carbon metabolism; tetrahydrofolate interconversion. Catalyzes the oxidation of 5,10-methylenetetrahydrofolate to 5,10-methenyltetrahydrofolate and then the hydrolysis of 5,10-methenyltetrahydrofolate to 10-formyltetrahydrofolate. This chain is Bifunctional protein FolD, found in Neisseria meningitidis serogroup A / serotype 4A (strain DSM 15465 / Z2491).